The following is a 562-amino-acid chain: Urocanate hydratase (562 aa).

Residues 52–53 (GG), Gln130, 176–178 (GMG), Glu196, Arg201, 242–243 (NA), 263–267 (QTSAH), 273–274 (YL), and Tyr322 contribute to the NAD(+) site. Residue Cys410 is part of the active site. Residue Gly492 participates in NAD(+) binding.

Belongs to the urocanase family. NAD(+) is required as a cofactor.

It is found in the cytoplasm. The catalysed reaction is 4-imidazolone-5-propanoate = trans-urocanate + H2O. It participates in amino-acid degradation; L-histidine degradation into L-glutamate; N-formimidoyl-L-glutamate from L-histidine: step 2/3. Its function is as follows. Catalyzes the conversion of urocanate to 4-imidazolone-5-propionate. The chain is Urocanate hydratase from Shewanella pealeana (strain ATCC 700345 / ANG-SQ1).